Here is a 368-residue protein sequence, read N- to C-terminus: Biotin synthase (368 aa).

The Radical SAM core domain occupies 46-277 (VHGDEVALCG…AAHIFVMGGR (232 aa)). Positions 64, 68, and 71 each coordinate [4Fe-4S] cluster. Ser-109, Cys-142, and Cys-202 together coordinate [2Fe-2S] cluster. Residues 347–368 (RAAEPGGKRGLPVVGPPRGGCA) form a disordered region.

The protein belongs to the radical SAM superfamily. Biotin synthase family. As to quaternary structure, homodimer. [4Fe-4S] cluster serves as cofactor. The cofactor is [2Fe-2S] cluster.

The catalysed reaction is (4R,5S)-dethiobiotin + (sulfur carrier)-SH + 2 reduced [2Fe-2S]-[ferredoxin] + 2 S-adenosyl-L-methionine = (sulfur carrier)-H + biotin + 2 5'-deoxyadenosine + 2 L-methionine + 2 oxidized [2Fe-2S]-[ferredoxin]. It functions in the pathway cofactor biosynthesis; biotin biosynthesis; biotin from 7,8-diaminononanoate: step 2/2. In terms of biological role, catalyzes the conversion of dethiobiotin (DTB) to biotin by the insertion of a sulfur atom into dethiobiotin via a radical-based mechanism. The chain is Biotin synthase from Anaeromyxobacter sp. (strain Fw109-5).